Here is a 245-residue protein sequence, read N- to C-terminus: MAPK-interacting and spindle-stabilizing protein-like (245 aa).

The disordered stretch occupies residues 1–245; sequence MSDEFSLADA…PMPGGPHSYH (245 aa). Position 2 is an N-acetylserine (serine 2). Phosphoserine is present on residues serine 2, serine 6, and serine 15. Polar residues predominate over residues 17–26; it reads AKTSAVSNTK. The segment covering 34 to 51 has biased composition (low complexity); it reads WPGSNPWNNPSAPSSVPS. 3 stretches are compositionally biased toward pro residues: residues 74 to 127, 164 to 190, and 198 to 207; these read SVPP…PELP, PNMP…PPVP, and AWGPPAPYPA.

The protein belongs to the MISS family.

The chain is MAPK-interacting and spindle-stabilizing protein-like (MAPK1IP1L) from Homo sapiens (Human).